We begin with the raw amino-acid sequence, 433 residues long: DNA polymerase processivity factor (433 aa).

Positions 274 to 433 (RGDPFDKNYV…VPNTKKQKCG (160 aa)) are disordered. Composition is skewed to gly residues over residues 289 to 298 (SRGGGGGGGS), 325 to 336 (GLGGLGGGGGGG), and 344 to 359 (GGGGSGTRKMSSGGGG). Residues 360–376 (GDHDHGLSSKEKYEQHK) show a composition bias toward basic and acidic residues. Gly residues predominate over residues 385–398 (GGSGGGGGGGGGGL). Lys-410 participates in a covalent cross-link: Glycyl lysine isopeptide (Lys-Gly) (interchain with G-Cter in host SUMO1). Phosphoserine is present on residues Ser-413, Ser-415, and Ser-418.

It belongs to the herpesviridae polymerase accessory protein family. Forms homodimers. Interacts with host SMARCB1. Interacts with host NCL/nucleolin; this interaction is important for the organization of proteins within viral replication compartments. Interacts with UL112/UL113; this interaction is necessary for efficient viral DNA replication. Interacts with UL84. Interacts with the uracil DNA glycosylase UL114. Interacts with the DNA polymerase catalytic subunit UL54. Interacts with host IRF3. Interacts with host RELA. Post-translationally, phosphorylated by UL97 on serine residues, phosphorylation seems important for UL44 nuclear entry but does not directly affect its role in replication. Sumoylated. Sumoylation on Lys-410 increases viral DNA replication.

It is found in the virion. The protein resides in the host nucleus. Accessory subunit of the DNA polymerase that plays an essential role in viral DNA replication and acts by increasing the processivity of polymerization. Forms dimers that binds to double-stranded DNA and UL54 specifically to stimulates long chain DNA synthesis efficiently. Plays an important role in maintaining the structure of viral replication compartments by interacting with host nucleolin/NUC. In addition, suppresses innate immune responses through effects on host IRF3 and NF-kappa-B. Mechanistically, interfere with the binding of IRF3 and the p65 NF-kappa-B subunit to the promoters of antiviral genes, thereby inhibiting the expression of these genes. This chain is DNA polymerase processivity factor (UL44), found in Homo sapiens (Human).